Consider the following 194-residue polypeptide: Holliday junction branch migration complex subunit RuvA (194 aa).

Positions 1 to 62 (MIGYLKGNVI…EDSLDLYGFK (62 aa)) are domain I. A domain II region spans residues 63–136 (TMEERELFET…KGKLKDMSGD (74 aa)). The interval 136–140 (DFEEP) is flexible linker. Residues 141–194 (LPDNRNTELSDALASLGYSELEIEEALSNADIKNNGSLEENIKKALGYLGSKGS) form a domain III region.

The protein belongs to the RuvA family. As to quaternary structure, homotetramer. Forms an RuvA(8)-RuvB(12)-Holliday junction (HJ) complex. HJ DNA is sandwiched between 2 RuvA tetramers; dsDNA enters through RuvA and exits via RuvB. An RuvB hexamer assembles on each DNA strand where it exits the tetramer. Each RuvB hexamer is contacted by two RuvA subunits (via domain III) on 2 adjacent RuvB subunits; this complex drives branch migration. In the full resolvosome a probable DNA-RuvA(4)-RuvB(12)-RuvC(2) complex forms which resolves the HJ.

The protein localises to the cytoplasm. In terms of biological role, the RuvA-RuvB-RuvC complex processes Holliday junction (HJ) DNA during genetic recombination and DNA repair, while the RuvA-RuvB complex plays an important role in the rescue of blocked DNA replication forks via replication fork reversal (RFR). RuvA specifically binds to HJ cruciform DNA, conferring on it an open structure. The RuvB hexamer acts as an ATP-dependent pump, pulling dsDNA into and through the RuvAB complex. HJ branch migration allows RuvC to scan DNA until it finds its consensus sequence, where it cleaves and resolves the cruciform DNA. In Halothermothrix orenii (strain H 168 / OCM 544 / DSM 9562), this protein is Holliday junction branch migration complex subunit RuvA.